The sequence spans 366 residues: tRNA/tmRNA (uracil-C(5))-methyltransferase (366 aa).

S-adenosyl-L-methionine contacts are provided by glutamine 190, tyrosine 218, asparagine 223, glutamate 239, and aspartate 299. The Nucleophile role is filled by cysteine 324. The active-site Proton acceptor is glutamate 358.

This sequence belongs to the class I-like SAM-binding methyltransferase superfamily. RNA M5U methyltransferase family. TrmA subfamily.

It catalyses the reaction uridine(54) in tRNA + S-adenosyl-L-methionine = 5-methyluridine(54) in tRNA + S-adenosyl-L-homocysteine + H(+). The enzyme catalyses uridine(341) in tmRNA + S-adenosyl-L-methionine = 5-methyluridine(341) in tmRNA + S-adenosyl-L-homocysteine + H(+). In terms of biological role, dual-specificity methyltransferase that catalyzes the formation of 5-methyluridine at position 54 (m5U54) in all tRNAs, and that of position 341 (m5U341) in tmRNA (transfer-mRNA). The sequence is that of tRNA/tmRNA (uracil-C(5))-methyltransferase from Escherichia coli (strain UTI89 / UPEC).